The chain runs to 542 residues: Apolipoprotein N-acyltransferase (542 aa).

Helical transmembrane passes span 24 to 44 (VVAS…GLFA), 54 to 74 (VWCI…SWML), 85 to 105 (FVWG…SCLV), 116 to 136 (ALVW…YGLL), 160 to 180 (FFGW…CFAV), and 190 to 210 (GLWL…YEYL). Residues 220–499 (LRVAIVQPGY…TGVLQVSVPL (280 aa)) form the CN hydrolase domain. Glutamate 264 acts as the Proton acceptor in catalysis. Residue lysine 349 is part of the active site. Residue cysteine 404 is the Nucleophile of the active site. A helical transmembrane segment spans residues 509–529 (LGDAPLLLIAVCSVIGAIAYF).

Belongs to the CN hydrolase family. Apolipoprotein N-acyltransferase subfamily.

The protein localises to the cell inner membrane. It catalyses the reaction N-terminal S-1,2-diacyl-sn-glyceryl-L-cysteinyl-[lipoprotein] + a glycerophospholipid = N-acyl-S-1,2-diacyl-sn-glyceryl-L-cysteinyl-[lipoprotein] + a 2-acyl-sn-glycero-3-phospholipid + H(+). Its pathway is protein modification; lipoprotein biosynthesis (N-acyl transfer). Its function is as follows. Catalyzes the phospholipid dependent N-acylation of the N-terminal cysteine of apolipoprotein, the last step in lipoprotein maturation. The chain is Apolipoprotein N-acyltransferase from Chlamydia trachomatis serovar D (strain ATCC VR-885 / DSM 19411 / UW-3/Cx).